A 224-amino-acid polypeptide reads, in one-letter code: Ras-related protein RABA4b (224 aa).

At Ala-2 the chain carries N-acetylalanine. A GTP-binding site is contributed by 24-31 (GDSAVGKS). An Effector region motif is present at residues 46 to 54 (SKATIGVEF). Residues 72–76 (DTAGQ), 130–133 (NKSD), and 160–161 (SA) each bind GTP. S-geranylgeranyl cysteine attachment occurs at residues Cys-220 and Cys-221.

The protein belongs to the small GTPase superfamily. Rab family. As to quaternary structure, interacts with TCTP1. Expressed in roots, stems, leaves and flowers. Expressed in tips of growing root hair cells.

Its subcellular location is the early endosome membrane. The protein localises to the golgi apparatus. The protein resides in the trans-Golgi network membrane. Regulator of membrane trafficking. May be required for secretion of cell wall components in cells. The polypeptide is Ras-related protein RABA4b (Arabidopsis thaliana (Mouse-ear cress)).